A 520-amino-acid chain; its full sequence is Na(+)/H(+) antiporter NhaB (520 aa).

The next 12 membrane-spanning stretches (helical) occupy residues Gly27–Ile49, Tyr62–Ala82, Leu97–Phe117, Leu120–Phe140, Phe144–Ile164, Leu202–Pro222, Phe238–Ile258, Gly303–Ile323, Thr348–Ile368, Leu391–Val411, Ala447–Ile467, and Val475–Phe495.

It belongs to the NhaB Na(+)/H(+) (TC 2.A.34) antiporter family.

The protein localises to the cell inner membrane. The catalysed reaction is 2 Na(+)(in) + 3 H(+)(out) = 2 Na(+)(out) + 3 H(+)(in). Functionally, na(+)/H(+) antiporter that extrudes sodium in exchange for external protons. This chain is Na(+)/H(+) antiporter NhaB, found in Cronobacter sakazakii (strain ATCC BAA-894) (Enterobacter sakazakii).